An 877-amino-acid chain; its full sequence is Ewing's tumor-associated antigen 1 homolog (877 aa).

Positions 1-82 are disordered; sequence MQLKDGGTGM…GRSPRGKETP (82 aa). The segment covering 56–65 has biased composition (basic residues); that stretch reads AGTRSARRAQ. Lys-87 is covalently cross-linked (Glycyl lysine isopeptide (Lys-Gly) (interchain with G-Cter in SUMO2)). An ATR-activation domain (AAD) motif is present at residues 107 to 113; it reads IFWDQNS. 2 coiled-coil regions span residues 185-213 and 306-335; these read KTKNREKELMKLAQQFDKNMEELDVIQEQ and AFLNNSKTSLRKKNALLQEEIITTETLLTE. Glycyl lysine isopeptide (Lys-Gly) (interchain with G-Cter in SUMO2) cross-links involve residues Lys-416 and Lys-444. Residues 450-479 form a disordered region; it reads PSKTRNGELRNAGEHRFSSHPGDESRKVPF. The span at 454-476 shows a compositional bias: basic and acidic residues; it reads RNGELRNAGEHRFSSHPGDESRK. Ser-467 carries the phosphoserine modification. Lys-510 is covalently cross-linked (Glycyl lysine isopeptide (Lys-Gly) (interchain with G-Cter in SUMO2)). Residues 607–622 carry the RBM1 motif motif; it reads GEVDDDLFCQACDDIE. Disordered stretches follow at residues 626–664 and 818–877; these read QQENKGSEESESVSYTSTRGSRSSSTASKQASQSAPSKH and ANQQ…ISLP. Residues 637–662 show a composition bias toward low complexity; sequence SVSYTSTRGSRSSSTASKQASQSAPS. A compositionally biased stretch (polar residues) spans 818–833; the sequence is ANQQQSSINYSESLKP. A compositionally biased stretch (basic and acidic residues) spans 840–859; that stretch reads ERNRKYSPEEIQRKRQEALV. The short motif at 843–865 is the RBM2 motif element; the sequence is RKYSPEEIQRKRQEALVRRKAKA. Positions 868–877 are enriched in polar residues; the sequence is TVQSAPISLP.

As to quaternary structure, interacts (via RBM1 motif) with RPA1. Interacts (via RBM2 motif) with RPA2. Interacts (via the ATR-activation domain motif) with ATR. In terms of processing, phosphorylated by ATR.

The protein resides in the nucleus. In terms of biological role, replication stress response protein that accumulates at DNA damage sites and promotes replication fork progression and integrity. Recruited to stalled replication forks via interaction with the RPA complex and directly stimulates ATR kinase activity independently of TOPBP1. Probably only regulates a subset of ATR targets. The sequence is that of Ewing's tumor-associated antigen 1 homolog from Mus musculus (Mouse).